The sequence spans 845 residues: Beta-mannosidase B (845 aa).

The N-linked (GlcNAc...) asparagine glycan is linked to Asn-252. The active-site Proton donor is the Glu-432. 2 N-linked (GlcNAc...) asparagine glycosylation sites follow: Asn-717 and Asn-723.

Belongs to the glycosyl hydrolase 2 family. Beta-mannosidase B subfamily.

It catalyses the reaction Hydrolysis of terminal, non-reducing beta-D-mannose residues in beta-D-mannosides.. The protein operates within glycan metabolism; N-glycan degradation. Exoglycosidase that cleaves the single beta-linked mannose residue from the non-reducing end of beta-mannosidic oligosaccharides of various complexity and length. Prefers mannobiose over mannotriose and has no activity against polymeric mannan. Is also severely restricted by galactosyl substitutions at the +1 subsite. The polypeptide is Beta-mannosidase B (mndB) (Aspergillus fumigatus (strain ATCC MYA-4609 / CBS 101355 / FGSC A1100 / Af293) (Neosartorya fumigata)).